Here is a 169-residue protein sequence, read N- to C-terminus: Peptide methionine sulfoxide reductase MsrA (169 aa).

Residue C10 is part of the active site.

Belongs to the MsrA Met sulfoxide reductase family.

The enzyme catalyses L-methionyl-[protein] + [thioredoxin]-disulfide + H2O = L-methionyl-(S)-S-oxide-[protein] + [thioredoxin]-dithiol. The catalysed reaction is [thioredoxin]-disulfide + L-methionine + H2O = L-methionine (S)-S-oxide + [thioredoxin]-dithiol. In terms of biological role, has an important function as a repair enzyme for proteins that have been inactivated by oxidation. Catalyzes the reversible oxidation-reduction of methionine sulfoxide in proteins to methionine. In Streptococcus pyogenes serotype M2 (strain MGAS10270), this protein is Peptide methionine sulfoxide reductase MsrA.